Reading from the N-terminus, the 295-residue chain is MSLKHFIQITKPGIIFGNVLSVAGGFFLASKGNIDFGVFLAAVIGTSLVVASGCVFNNCIDRDIDQRMERTRNRVLVQGLVSLKLALLYATLLGIAGVGLLYTEANPLAALFAVIGFVIYVGLYSLYLKRRSVHGTLVGSLSGAMPPVIGYCAVSNSFDFAALTLLVMFSLWQMPHSYAIAIFRFNDYRAAKIPVLPVKRGILVTKRHIMLYILAFLVATLMLTVGGYAGLNYLAVAAGMGMYWLYMAWKGYKAVDDTVWARKLFVFSIFTITALSVMMSVDFQVTKELLVTYAF.

The next 9 helical transmembrane spans lie at 9 to 29 (ITKP…FFLA), 36 to 56 (FGVF…GCVF), 80 to 100 (LVSL…GVGL), 108 to 128 (LAAL…SLYL), 135 to 155 (GTLV…CAVS), 163 to 183 (LTLL…IAIF), 209 to 229 (IMLY…GGYA), 230 to 250 (GLNY…MAWK), and 265 to 285 (FVFS…DFQV).

This sequence belongs to the UbiA prenyltransferase family. Protoheme IX farnesyltransferase subfamily.

The protein resides in the cell inner membrane. It catalyses the reaction heme b + (2E,6E)-farnesyl diphosphate + H2O = Fe(II)-heme o + diphosphate. It participates in porphyrin-containing compound metabolism; heme O biosynthesis; heme O from protoheme: step 1/1. Functionally, converts heme B (protoheme IX) to heme O by substitution of the vinyl group on carbon 2 of heme B porphyrin ring with a hydroxyethyl farnesyl side group. This chain is Protoheme IX farnesyltransferase, found in Pseudomonas syringae pv. syringae (strain B728a).